Consider the following 515-residue polypeptide: Maturase K (515 aa).

The protein belongs to the intron maturase 2 family. MatK subfamily.

The protein resides in the plastid. The protein localises to the chloroplast. Usually encoded in the trnK tRNA gene intron. Probably assists in splicing its own and other chloroplast group II introns. The polypeptide is Maturase K (Pinus armandii (Chinese white pine)).